Consider the following 432-residue polypeptide: MPVVVVMGAQWGDEGKGKFVDLLAERAQVVVRSTGGSNAGHTVWAGGRQYKLHQVPSGILYPGTLCVIGHGVVLDPPKLLEEMDRLASQGVDLSSLRISGGAHIVFPFHIRLDEAEEDRKGDRKIGTTRRGIGPAYMDKFARVGIRLVDMLDRDEFLPKLTALVEEKNRILEKVYGLPGFTVEEIAEPYLEYAERLRPYVANTVELVNDAIDAGKNVLFEGAQGHLLDIDFGTYPYVTASHPIAAGAIIGAGVGPTKVSRVVGVVKAYTSRVGEGPFPTELHGEEAHRIREEGHEYGTTTGRPRRIGWLDLVMVRYACRVSGITDLAVPHLDTLAKTGLPTLKVCVGYRMPDGTVTREFPVGLKALSQVEPVYEELPNWEWSAEMSTARQYDELPEGARRYVRLIEDVTGVRVSILGVGSERTQAIYRSAIF.

GTP contacts are provided by residues 12-18 (GDEGKGK) and 40-42 (GHT). The active-site Proton acceptor is aspartate 13. 2 residues coordinate Mg(2+): aspartate 13 and glycine 40. Residues 13-16 (DEGK), 38-41 (NAGH), threonine 128, arginine 142, glutamine 223, threonine 238, and arginine 302 contribute to the IMP site. Histidine 41 functions as the Proton donor in the catalytic mechanism. Residue 298-304 (TTTGRPR) participates in substrate binding. Residues arginine 304, 330–332 (HLD), and 417–419 (GVG) contribute to the GTP site.

The protein belongs to the adenylosuccinate synthetase family. In terms of assembly, homodimer. Requires Mg(2+) as cofactor.

Its subcellular location is the cytoplasm. The enzyme catalyses IMP + L-aspartate + GTP = N(6)-(1,2-dicarboxyethyl)-AMP + GDP + phosphate + 2 H(+). The protein operates within purine metabolism; AMP biosynthesis via de novo pathway; AMP from IMP: step 1/2. Its function is as follows. Plays an important role in the de novo pathway of purine nucleotide biosynthesis. Catalyzes the first committed step in the biosynthesis of AMP from IMP. This Symbiobacterium thermophilum (strain DSM 24528 / JCM 14929 / IAM 14863 / T) protein is Adenylosuccinate synthetase.